Here is a 783-residue protein sequence, read N- to C-terminus: Endonuclease MutS2 (783 aa).

Residue 328–335 (GPNTGGKT) participates in ATP binding. Residues 708-783 (LDLRGKRYEE…GSGCTIATLG (76 aa)) form the Smr domain.

This sequence belongs to the DNA mismatch repair MutS family. MutS2 subfamily. In terms of assembly, homodimer. Binds to stalled ribosomes, contacting rRNA.

Its function is as follows. Endonuclease that is involved in the suppression of homologous recombination and thus may have a key role in the control of bacterial genetic diversity. In terms of biological role, acts as a ribosome collision sensor, splitting the ribosome into its 2 subunits. Detects stalled/collided 70S ribosomes which it binds and splits by an ATP-hydrolysis driven conformational change. Acts upstream of the ribosome quality control system (RQC), a ribosome-associated complex that mediates the extraction of incompletely synthesized nascent chains from stalled ribosomes and their subsequent degradation. Probably generates substrates for RQC. In Streptococcus thermophilus (strain ATCC BAA-491 / LMD-9), this protein is Endonuclease MutS2.